The sequence spans 100 residues: Small ribosomal subunit protein bS21 (100 aa).

The interval 61–100 (KLQREGLLPMKPKPVFGAGPGGDRGRGPAAGAGAGPRGPR) is disordered. A compositionally biased stretch (gly residues) spans 78–100 (AGPGGDRGRGPAAGAGAGPRGPR).

The protein belongs to the bacterial ribosomal protein bS21 family.

This Rhodopseudomonas palustris (strain BisB18) protein is Small ribosomal subunit protein bS21.